Consider the following 192-residue polypeptide: LexA repressor (192 aa).

Positions 15 to 35 form a DNA-binding region, H-T-H motif; that stretch reads RAEIARELGFRSANAAEEHLK. Catalysis depends on for autocatalytic cleavage activity residues serine 109 and lysine 146.

Belongs to the peptidase S24 family. Homodimer.

The catalysed reaction is Hydrolysis of Ala-|-Gly bond in repressor LexA.. Functionally, represses a number of genes involved in the response to DNA damage (SOS response), including recA and lexA. In the presence of single-stranded DNA, RecA interacts with LexA causing an autocatalytic cleavage which disrupts the DNA-binding part of LexA, leading to derepression of the SOS regulon and eventually DNA repair. This Photobacterium profundum (strain SS9) protein is LexA repressor.